The primary structure comprises 234 residues: STARD3 N-terminal-like protein (234 aa).

Position 1 is an N-acetylmethionine (Met1). Topologically, residues 1–53 (MNHLPEDMENALTGSQSSHASLRNIHSINPTQLMARIESYEGREKKGISDVRR) are cytoplasmic. Residues Ser15, Ser21, and Ser27 each carry the phosphoserine modification. The MENTAL domain maps to 48 to 218 (ISDVRRTFCL…YSPPESEAGS (171 aa)). A helical transmembrane segment spans residues 54–74 (TFCLFVTFDLLFVTLLWIIEL). At 75-97 (NVNGGIENTLEKEVMQYDYYSSY) the chain is on the extracellular side. A helical membrane pass occupies residues 98–118 (FDIFLLAVFRFKVLILAYAVC). The Cytoplasmic portion of the chain corresponds to 119–122 (RLRH). The chain crosses the membrane as a helical span at residues 123–143 (WWAIALTTAVTSAFLLAKVIL). Over 144 to 150 (SKLFSQG) the chain is Extracellular. A helical transmembrane segment spans residues 151-171 (AFGYVLPIISFILAWIETWFL). Over 172–234 (DFKVLPQEAE…QDSEKPLLEL (63 aa)) the chain is Cytoplasmic. At Ser193 the chain carries Phosphoserine. A disordered region spans residues 200 to 234 (PGGLSDGQFYSPPESEAGSEEAEEKQDSEKPLLEL). An FFAT motif is present at residues 208-213 (FYSPPE). Residues 224–234 (KQDSEKPLLEL) are compositionally biased toward basic and acidic residues.

This sequence belongs to the STARD3 family. Homodimer. Interacts (via the MENTAL domain) with STARD3NL. Interacts (via FFAT motif) with VAPA. Interacts (via FFAT motif) with VAPB. Interacts (via FFAT motif) with MOSPD2 (via MSP domain).

The protein resides in the late endosome membrane. In terms of biological role, tethering protein that creates contact site between the endoplasmic reticulum and late endosomes: localizes to late endosome membranes and contacts the endoplasmic reticulum via interaction with VAPA and VAPB. In Homo sapiens (Human), this protein is STARD3 N-terminal-like protein.